We begin with the raw amino-acid sequence, 137 residues long: Peptide methionine sulfoxide reductase MsrB (137 aa).

A MsrB domain is found at 9–131 (DAEWRAMLDD…NSASLRFDAT (123 aa)). Zn(2+)-binding residues include Cys-48, Cys-51, Cys-97, and Cys-100. The Nucleophile role is filled by Cys-120.

This sequence belongs to the MsrB Met sulfoxide reductase family. It depends on Zn(2+) as a cofactor.

It carries out the reaction L-methionyl-[protein] + [thioredoxin]-disulfide + H2O = L-methionyl-(R)-S-oxide-[protein] + [thioredoxin]-dithiol. The chain is Peptide methionine sulfoxide reductase MsrB from Herminiimonas arsenicoxydans.